A 248-amino-acid chain; its full sequence is MDRVAFSIFGIDIMWYGILITLGVILGYVVAVKLAKMENISENTILDILVWALPLAIVGARAYYVIFEWDYYSKNLGEIIDIRGGGLAIYGGIIAAVITCYVICKKKNLKFLKMLDIFMPAIALGQAIGRWGNFINKEAYGTPTNLPWAITIDGVKVHPTFLYESLGDFLIFLLLVYVFKNRKKFNGQITSMYMILYGILRFFVEGLRTDSLYIGALRVSQLVSIAIIIAGVILQIKYKKQIIKSDEK.

Helical transmembrane passes span 6–26 (FSIFGIDIMWYGILITLGVIL), 48–68 (ILVWALPLAIVGARAYYVIFE), and 84–104 (GGGLAIYGGIIAAVITCYVIC). Position 130 (R130) interacts with a 1,2-diacyl-sn-glycero-3-phospho-(1'-sn-glycerol). Helical transmembrane passes span 187–207 (GQITSMYMILYGILRFFVEGL) and 214–234 (IGALRVSQLVSIAIIIAGVIL).

This sequence belongs to the Lgt family.

It is found in the cell membrane. The catalysed reaction is L-cysteinyl-[prolipoprotein] + a 1,2-diacyl-sn-glycero-3-phospho-(1'-sn-glycerol) = an S-1,2-diacyl-sn-glyceryl-L-cysteinyl-[prolipoprotein] + sn-glycerol 1-phosphate + H(+). It functions in the pathway protein modification; lipoprotein biosynthesis (diacylglyceryl transfer). In terms of biological role, catalyzes the transfer of the diacylglyceryl group from phosphatidylglycerol to the sulfhydryl group of the N-terminal cysteine of a prolipoprotein, the first step in the formation of mature lipoproteins. This Finegoldia magna (strain ATCC 29328 / DSM 20472 / WAL 2508) (Peptostreptococcus magnus) protein is Phosphatidylglycerol--prolipoprotein diacylglyceryl transferase.